Reading from the N-terminus, the 402-residue chain is Formate-dependent phosphoribosylglycinamide formyltransferase (402 aa).

Residues 22 to 23 and E82 each bind N(1)-(5-phospho-beta-D-ribosyl)glycinamide; that span reads EL. ATP is bound by residues R115, K160, 165 to 170, 200 to 203, and E208; these read SSGKGQ and EGFV. In terms of domain architecture, ATP-grasp spans 120 to 318; it reads RLAAETLGLP…EFELHARAIL (199 aa). Positions 277 and 289 each coordinate Mg(2+). N(1)-(5-phospho-beta-D-ribosyl)glycinamide contacts are provided by residues D296, K365, and 372 to 373; that span reads RR.

The protein belongs to the PurK/PurT family. Homodimer.

It carries out the reaction N(1)-(5-phospho-beta-D-ribosyl)glycinamide + formate + ATP = N(2)-formyl-N(1)-(5-phospho-beta-D-ribosyl)glycinamide + ADP + phosphate + H(+). Its pathway is purine metabolism; IMP biosynthesis via de novo pathway; N(2)-formyl-N(1)-(5-phospho-D-ribosyl)glycinamide from N(1)-(5-phospho-D-ribosyl)glycinamide (formate route): step 1/1. Functionally, involved in the de novo purine biosynthesis. Catalyzes the transfer of formate to 5-phospho-ribosyl-glycinamide (GAR), producing 5-phospho-ribosyl-N-formylglycinamide (FGAR). Formate is provided by PurU via hydrolysis of 10-formyl-tetrahydrofolate. The chain is Formate-dependent phosphoribosylglycinamide formyltransferase from Mycobacteroides abscessus (strain ATCC 19977 / DSM 44196 / CCUG 20993 / CIP 104536 / JCM 13569 / NCTC 13031 / TMC 1543 / L948) (Mycobacterium abscessus).